We begin with the raw amino-acid sequence, 2138 residues long: Conidial yellow pigment biosynthesis polyketide synthase melA (2138 aa).

The tract at residues 8–244 (YLFGDQTADF…TRVPIHGPYH (237 aa)) is N-terminal acylcarrier protein transacylase domain (SAT). Residues 373-804 (QSKIAIIGLS…GGNTALMVED (432 aa)) form the Ketosynthase family 3 (KS3) domain. Residues C545, H680, and H722 each act as for beta-ketoacyl synthase activity in the active site. The segment at 910-1229 (FVFTGQGAQY…VSALYMAGIE (320 aa)) is malonyl-CoA:ACP transacylase (MAT) domain. S999 serves as the catalytic For acyl/malonyl transferase activity. Residues 1288–1601 (SSAAQRVLET…RKILDMALPP (314 aa)) form a product template (PT) domain region. The segment at 1292 to 1423 (QRVLETSGDN…CNIKFFDPSP (132 aa)) is N-terminal hotdog fold. The 305-residue stretch at 1292–1596 (QRVLETSGDN…FQGLARKILD (305 aa)) folds into the PKS/mFAS DH domain. H1324 functions as the Proton acceptor; for dehydratase activity in the catalytic mechanism. The C-terminal hotdog fold stretch occupies residues 1451–1596 (AHRMKRGMVY…FQGLARKILD (146 aa)). Catalysis depends on D1509, which acts as the Proton donor; for dehydratase activity. The Carrier 1 domain maps to 1640-1714 (PSMATRALAI…DFKHLLAQMG (75 aa)). At S1674 the chain carries O-(pantetheine 4'-phosphoryl)serine. Positions 1712–1758 (QMGPGESSDGSSSEGDMSSAASSTDLSSPNTSGLPTPANEKSMTHGL) are disordered. Low complexity predominate over residues 1713–1739 (MGPGESSDGSSSEGDMSSAASSTDLSS). Residues 1740–1758 (PNTSGLPTPANEKSMTHGL) show a composition bias toward polar residues. The Carrier 2 domain occupies 1759 to 1836 (QGQNDSMRQI…DIETTLDLKP (78 aa)). S1796 carries the post-translational modification O-(pantetheine 4'-phosphoryl)serine. A claisen cyclase domain region spans residues 1863–2135 (TQHPPATSIL…ELARFIANSM (273 aa)). S1953 (for Claisen cyclase activity) is an active-site residue.

The enzyme catalyses 6 malonyl-CoA + acetyl-CoA + 6 H(+) = naphtopyrone YWA1 + 6 CO2 + 7 CoA + H2O. The protein operates within pigment biosynthesis. Its pathway is polyketide biosynthesis; heptaketide naphthopyrone YWA1 biosynthesis. Non-reducing polyketide synthase involved in the biosynthesis of a yellow conidial pigment. Probably forms the heptaketide naphthopyrene YWA1 via condensation of acetate units. This Penicillium expansum (Blue mold rot fungus) protein is Conidial yellow pigment biosynthesis polyketide synthase melA.